The chain runs to 1426 residues: ABC transporter G family member 31 (1426 aa).

One can recognise an ABC transporter 1 domain in the interval 142–415 (LRHLRIYRGG…FAGMGFRCPE (274 aa)). 175 to 182 (GPPSSGKT) lines the ATP pocket. The region spanning 493 to 706 (ELLKSNFQWQ…AQNAISVNEF (214 aa)) is the ABC transmembrane type-2 1 domain. A run of 7 helical transmembrane segments spans residues 511-531 (FIYV…MTVF), 544-564 (GIIY…NGFT), 592-612 (LPSW…WVLV), 630-650 (FLLL…MASL), 655-675 (IVAN…GGFI), 681-701 (IPAW…QNAI), and 741-761 (IGVG…TLFL). An ABC transporter 2 domain is found at 824 to 1076 (MCFKNINYYV…NLVEFFEAIP (253 aa)). 869-876 (GVSGAGKT) is an ATP binding site. An ABC transmembrane type-2 2 domain is found at 1149–1363 (AQYAACLWKQ…TLYGLLTSQF (215 aa)). Helical transmembrane passes span 1168-1188 (YTAV…TICW), 1200-1220 (IFNA…TNAT), 1245-1265 (LPFA…QSLI), 1283-1303 (FLWY…YGMM), 1313-1333 (VAPI…GFMI), 1341-1363 (WWRW…TSQF), and 1398-1418 (VVAG…ALAI).

The protein belongs to the ABC transporter superfamily. ABCG family. PDR (TC 3.A.1.205) subfamily.

The protein resides in the membrane. In terms of biological role, may be a general defense protein. This is ABC transporter G family member 31 from Oryza sativa subsp. japonica (Rice).